A 316-amino-acid chain; its full sequence is Leucine-rich repeat-containing protein 73 (316 aa).

7 LRR repeats span residues 57–78 (SLAQ…KQLA), 86–106 (SIQS…ALLN), 114–137 (ALVA…CGLL), 145–166 (GLKE…SRLA), 174–187 (QVRV…PLGD), 202–223 (TLEV…TLLD), and 231–250 (ALRS…QQQI). Residues 257–296 (GEEEEEVAGGAGDTQEWERGREPAAHQRGSSSWMCPSDPS) are disordered. Positions 272 to 281 (EWERGREPAA) are enriched in basic and acidic residues. A compositionally biased stretch (low complexity) spans 286 to 296 (SSSWMCPSDPS).

This Homo sapiens (Human) protein is Leucine-rich repeat-containing protein 73 (LRRC73).